Reading from the N-terminus, the 201-residue chain is Putative ferritin heavy polypeptide-like 19 (201 aa).

The 123-residue stretch at 1-123 (MAFYFDQDDA…GYLSNLHKMG (123 aa)) folds into the Ferritin-like diiron domain.

It belongs to the ferritin family.

The sequence is that of Putative ferritin heavy polypeptide-like 19 (FTH1P19) from Homo sapiens (Human).